A 210-amino-acid chain; its full sequence is Syntaxin-binding protein 6 (210 aa).

Ser2 bears the N-acetylserine mark. Residues 151-210 form the v-SNARE coiled-coil homology domain; the sequence is GNSILHSAADSVTSAVQKASQALNERGERLGRAEEKTEDLKNSAQQFAETAHKLAMKHKC.

Part of a ternary complex containing SNAP25 and STX1A that can be dissociated by NAPA and NSF. Interacts with STX4A.

The protein resides in the cytoplasm. Its subcellular location is the membrane. Forms non-fusogenic complexes with SNAP25 and STX1A and may thereby modulate the formation of functional SNARE complexes and exocytosis. This is Syntaxin-binding protein 6 (STXBP6) from Bos taurus (Bovine).